The primary structure comprises 266 residues: Undecaprenyl-diphosphatase (266 aa).

8 consecutive transmembrane segments (helical) span residues 4 to 24 (WVLA…PVSS), 41 to 61 (GKVF…SVYF), 80 to 100 (FVAS…LLHD), 105 to 125 (VLFE…FALL), 139 to 159 (AGAF…LALI), 182 to 202 (AAEF…TVDL), 212 to 232 (DDAG…IITV), and 245 to 265 (APFA…LAFI).

The protein belongs to the UppP family.

It localises to the cell inner membrane. The enzyme catalyses di-trans,octa-cis-undecaprenyl diphosphate + H2O = di-trans,octa-cis-undecaprenyl phosphate + phosphate + H(+). Functionally, catalyzes the dephosphorylation of undecaprenyl diphosphate (UPP). Confers resistance to bacitracin. The protein is Undecaprenyl-diphosphatase of Phenylobacterium zucineum (strain HLK1).